A 249-amino-acid chain; its full sequence is Triosephosphate isomerase (249 aa).

Substrate-binding residues include Asn12 and Lys14. Lys14 is subject to N6-acetyllysine. The residue at position 68 (Tyr68) is a 3'-nitrotyrosine. A Phosphoserine modification is found at Ser80. His96 (electrophile) is an active-site residue. Ser106 carries the post-translational modification Phosphoserine. A Glycyl lysine isopeptide (Lys-Gly) (interchain with G-Cter in SUMO1) cross-link involves residue Lys142. An N6-succinyllysine modification is found at Lys149. Lys156 is modified (N6-acetyllysine; alternate). N6-succinyllysine; alternate is present on Lys156. Residue Ser159 is modified to Phosphoserine. Glu166 (proton acceptor) is an active-site residue. Residue Thr173 is modified to Phosphothreonine. Residue Lys194 is modified to N6-acetyllysine; alternate. Lys194 carries the N6-succinyllysine; alternate modification. Lys194 bears the N6-methyllysine; alternate mark. Residue Ser198 is modified to Phosphoserine. At Tyr209 the chain carries 3'-nitrotyrosine. Position 212 is a phosphoserine (Ser212). At Thr214 the chain carries Phosphothreonine. At Ser223 the chain carries Phosphoserine. An N6-acetyllysine modification is found at Lys238.

It belongs to the triosephosphate isomerase family. In terms of assembly, homodimer.

It is found in the cytoplasm. It carries out the reaction dihydroxyacetone phosphate = methylglyoxal + phosphate. It catalyses the reaction D-glyceraldehyde 3-phosphate = dihydroxyacetone phosphate. Its pathway is carbohydrate degradation; glycolysis; D-glyceraldehyde 3-phosphate from glycerone phosphate: step 1/1. The protein operates within carbohydrate biosynthesis; gluconeogenesis. Triosephosphate isomerase is an extremely efficient metabolic enzyme that catalyzes the interconversion between dihydroxyacetone phosphate (DHAP) and D-glyceraldehyde-3-phosphate (G3P) in glycolysis and gluconeogenesis. Functionally, it is also responsible for the non-negligible production of methylglyoxal a reactive cytotoxic side-product that modifies and can alter proteins, DNA and lipids. The chain is Triosephosphate isomerase (TPI1) from Bos taurus (Bovine).